The chain runs to 242 residues: Uridylate kinase (242 aa).

Position 8-11 (8-11 (KFSG)) interacts with ATP. Gly-50 serves as a coordination point for UMP. 2 residues coordinate ATP: Gly-51 and Arg-55. UMP-binding positions include Asp-71 and 132 to 139 (TGNPFFTT). ATP-binding residues include Thr-159, Tyr-165, and Asp-168.

It belongs to the UMP kinase family. Homohexamer.

The protein resides in the cytoplasm. The enzyme catalyses UMP + ATP = UDP + ADP. Its pathway is pyrimidine metabolism; CTP biosynthesis via de novo pathway; UDP from UMP (UMPK route): step 1/1. Inhibited by UTP. Functionally, catalyzes the reversible phosphorylation of UMP to UDP. The sequence is that of Uridylate kinase from Nitratiruptor sp. (strain SB155-2).